We begin with the raw amino-acid sequence, 246 residues long: Acetoacetate decarboxylase (246 aa).

The Schiff-base intermediate with acetoacetate role is filled by Lys116.

Belongs to the ADC family.

It carries out the reaction acetoacetate + H(+) = acetone + CO2. Its function is as follows. Catalyzes the conversion of acetoacetate to acetone and carbon dioxide. This is Acetoacetate decarboxylase from Bordetella avium (strain 197N).